The following is a 908-amino-acid chain: MMPLKMCTWGGSYPVGSPGKVGLLSFKETKNTGNKAGNESPVQELRQDVSKKIIECIIEESQKVLQLEDDSLDSKGKGLSDQATASHSVAGTEFSNIPGLLAIQHELQQGSRKADSQNAAEETELETQKCFPSDNNCEKSEKTEDETNNLTEVSSADQLDASKLETEILNKEAVEVKEGDVVNPASSDALSTKDFAAVEEVAPAKPPRHLTPEPDIVASTKKPVPARPPPPTNFPPPRPPPPSRPAPPPRKKKSDLEFEALKTPDLDVPKDNIASDSLLTTNMASESTVRDSLPSLDLASATSGDKIVTAQENGKAPDVQTVAGEVMGPQRPRSNSGRELTDEEILASVMIKNLDTGEEIPLSLAEEKLPTGINPLTPLTLHIMRRTKEYVSNDATQSDDEEKLQSQQTDTDGGRLKQKTTQLKKFLGKSVKRAKHLAEEYGERAINKVKSVRDEVFHTDQDDPSSSDDEGMPYTRPVKFKAAHGFKGPYDFDQIKVVQDLSGEHMGAVWTMKFSHCGRLLASAGQDNIVRIWALKNAFDYFNNMRMKYNTEGRVSPSPSQESLSSSKSDTDMGVCSGTDEDPDDKNAPFRQRPFCKYKGHTADLLDLSWSKNYFLLSSSMDKTVRLWHISRRECLCCFQHIDFVTAIAFHPRDDRYFLSGSLDGKLRLWNIPDKKVALWNEVDGQTKLITAANFCQNGKYAVIGTYDGRCIFYDTEHLKYHTQIHVRSTRGRNKVGRKITGIEPLPGENKILVTSNDSRIRLYDLRDLSLSMKYKGYVNSSSQIKASFSHDFTYLVSGSEDKYVYIWSTYHDLSKFTSVRRDRNDFWEGIKAHNAVVTSAIFAPNPSLMLSLDVQSEKLEGIDKYEDAEVLDNTSTGIVKTDNTEVLLSADFTGAQCFYVKNSFLYP.

The binding activity stretch occupies residues 1–163 (MMPLKMCTWG…SSADQLDASK (163 aa)). Phosphoserine occurs at positions 17, 40, 61, 71, 86, and 116. Polar residues-rich tracts occupy residues 108–120 (QQGS…QNAA) and 148–157 (NNLTEVSSAD). Disordered regions lie at residues 108–158 (QQGS…SADQ), 202–273 (APAK…KDNI), 309–341 (TAQE…RELT), 391–418 (VSND…RLKQ), and 454–474 (DEVF…GMPY). Residues Thr151 and Thr211 each carry the phosphothreonine modification. The interval 203–249 (PAKPPRHLTPEPDIVASTKKPVPARPPPPTNFPPPRPPPPSRPAPPP) is important for interaction with ARHGAP26 AND ARHGAP10. Over residues 225–248 (PARPPPPTNFPPPRPPPPSRPAPP) the composition is skewed to pro residues. Ser254 is subject to Phosphoserine. Positions 254-270 (SDLEFEALKTPDLDVPK) are enriched in basic and acidic residues. At Thr263 the chain carries Phosphothreonine. The important for interaction with RAB11A stretch occupies residues 326–339 (VMGPQRPRSNSGRE). Ser334 and Ser336 each carry phosphoserine. A phosphothreonine mark is found at Thr341 and Thr396. 4 positions are modified to phosphoserine: Ser398, Ser465, Ser466, and Ser467. Positions 462–471 (DDPSSSDDEG) are enriched in acidic residues. Tyr474 is modified (phosphotyrosine). Residues 504 to 543 (EHMGAVWTMKFSHCGRLLASAGQDNIVRIWALKNAFDYFN) form a WD 1 repeat. The interval 552-587 (EGRVSPSPSQESLSSSKSDTDMGVCSGTDEDPDDKN) is disordered. Ser556 and Ser560 each carry phosphoserine. Low complexity predominate over residues 556–568 (SPSPSQESLSSSK). WD repeat units lie at residues 600-638 (GHTA…CLCC), 640-680 (QHID…VALW), 685-724 (GQTK…YHTQ), 735-774 (KVGR…LSMK), and 779-818 (VNSS…SKFT).

In terms of assembly, interacts preferentially with the GTP-bound form of RAB11 when membrane-associated. Interacts with GRAF1/ARHGAP26 or GRAF2/ARHGAP10; the interaction connects the endoplasmic reticulum (ER) with the endosomal tubule. Interacts with VAPA (via MSP domain) or VAPB (via MSP domain); the interaction connects the ER with the endosomal tubule. Does not bind to other Rab and Rho small G proteins. Phosphorylated by ATK1; the phosphorylation stabilizes its interaction with RAB11A and RAB11B. Expressed in heart; brain; spleen; lung; liver; muscle and kidney.

It is found in the cytoplasm. The protein resides in the cytosol. It localises to the perinuclear region. The protein localises to the endosome membrane. Its subcellular location is the golgi apparatus. It is found in the trans-Golgi network. Its function is as follows. Downstream effector for Rab11 which regulates Rab11 intracellular membrane trafficking functions such as endocytic recycling, intracellular ciliogenesis and protein export. ATK1-mediated phosphorylation of WDR44 induces binding to Rab11 which activates endocytic recycling of transferrin receptor back to the plasma membrane. When bound to Rab11, prevents the formation of the ciliogenic Rab11-Rabin8/RAB3IP-RAB11FIP3 complex, therefore inhibiting preciliary trafficking and ciliogenesis. May participate in neo-synthesized protein export by connecting the endoplasmic reticulum (ER) with the endosomal tubule via direct interactions with the integral ER proteins VAPA or VAPB and the endosomal protein GRAFs (GRAF1/ARHGAP26 or GRAF2/ARHGAP10), which facilitates the transfer of proteins such as E-cadherin, MPP14 and CFTR into a Rab8-Rab10-Rab11-dependent export route. In Rattus norvegicus (Rat), this protein is WD repeat-containing protein 44.